We begin with the raw amino-acid sequence, 87 residues long: Small ribosomal subunit protein uS17 (87 aa).

It belongs to the universal ribosomal protein uS17 family. As to quaternary structure, part of the 30S ribosomal subunit.

Functionally, one of the primary rRNA binding proteins, it binds specifically to the 5'-end of 16S ribosomal RNA. In Thioalkalivibrio sulfidiphilus (strain HL-EbGR7), this protein is Small ribosomal subunit protein uS17.